The following is a 188-amino-acid chain: Tuftelin (188 aa).

Residues 1-181 adopt a coiled-coil conformation; sequence SLRKTVQDLL…DRMEHLIEKQ (181 aa).

Belongs to the tuftelin family. In terms of assembly, interacts with TFIP11.

It is found in the secreted. Its function is as follows. Involved in the structural organization of the epidermis. Involved in the mineralization and structural organization of enamel. The sequence is that of Tuftelin (TUFT1) from Sus scrofa (Pig).